Reading from the N-terminus, the 409-residue chain is Gamma-glutamyl phosphate reductase (409 aa).

This sequence belongs to the gamma-glutamyl phosphate reductase family.

Its subcellular location is the cytoplasm. It carries out the reaction L-glutamate 5-semialdehyde + phosphate + NADP(+) = L-glutamyl 5-phosphate + NADPH + H(+). It participates in amino-acid biosynthesis; L-proline biosynthesis; L-glutamate 5-semialdehyde from L-glutamate: step 2/2. Functionally, catalyzes the NADPH-dependent reduction of L-glutamate 5-phosphate into L-glutamate 5-semialdehyde and phosphate. The product spontaneously undergoes cyclization to form 1-pyrroline-5-carboxylate. The sequence is that of Gamma-glutamyl phosphate reductase from Bartonella tribocorum (strain CIP 105476 / IBS 506).